A 97-amino-acid chain; its full sequence is Plastocyanin A/B (97 aa).

The Plastocyanin-like domain maps to 1–97; sequence AEVKLGSDDG…AGMKGEVTVN (97 aa). The Cu cation site is built by His37, Cys82, His85, and Met90.

The protein belongs to the plastocyanin family. Requires Cu(2+) as cofactor.

Its subcellular location is the plastid. It localises to the chloroplast thylakoid membrane. Its function is as follows. Participates in electron transfer between P700 and the cytochrome b6-f complex in photosystem I. The chain is Plastocyanin A/B (PETE) from Petroselinum crispum (Parsley).